A 437-amino-acid polypeptide reads, in one-letter code: Glutamate-1-semialdehyde 2,1-aminomutase (437 aa).

Residue Lys274 is modified to N6-(pyridoxal phosphate)lysine.

The protein belongs to the class-III pyridoxal-phosphate-dependent aminotransferase family. HemL subfamily. Homodimer. The cofactor is pyridoxal 5'-phosphate.

The protein resides in the cytoplasm. It catalyses the reaction (S)-4-amino-5-oxopentanoate = 5-aminolevulinate. It functions in the pathway porphyrin-containing compound metabolism; protoporphyrin-IX biosynthesis; 5-aminolevulinate from L-glutamyl-tRNA(Glu): step 2/2. The polypeptide is Glutamate-1-semialdehyde 2,1-aminomutase (Verminephrobacter eiseniae (strain EF01-2)).